Here is a 201-residue protein sequence, read N- to C-terminus: Esterase TesA (201 aa).

The first 21 residues, Met1–Ala21, serve as a signal peptide directing secretion. Ser30 (nucleophile) is an active-site residue. Residues Asp177 and His180 contribute to the active site.

Belongs to the 'GDSL' lipolytic enzyme family.

Its subcellular location is the secreted. The enzyme catalyses a carboxylic ester + H2O = an alcohol + a carboxylate + H(+). Its function is as follows. Esterase that exhibits the highest activity towards Tween detergents and p-nitrophenyl esters of short acyl chain length. Also displays a low thioesterase activity towards palmitoyl-coenzyme A, but is not active towards acetyl-coenzyme A. The protein is Esterase TesA (tesA) of Pseudomonas aeruginosa (strain ATCC 15692 / DSM 22644 / CIP 104116 / JCM 14847 / LMG 12228 / 1C / PRS 101 / PAO1).